The chain runs to 230 residues: Orotidine 5'-phosphate decarboxylase (230 aa).

Substrate-binding positions include Asp-10, Lys-32, 59-68 (DLKFHDIPRT), Thr-116, Arg-177, Gln-186, Gly-206, and Arg-207. Lys-61 serves as the catalytic Proton donor.

Belongs to the OMP decarboxylase family. Type 1 subfamily. In terms of assembly, homodimer.

It catalyses the reaction orotidine 5'-phosphate + H(+) = UMP + CO2. It participates in pyrimidine metabolism; UMP biosynthesis via de novo pathway; UMP from orotate: step 2/2. In terms of biological role, catalyzes the decarboxylation of orotidine 5'-monophosphate (OMP) to uridine 5'-monophosphate (UMP). The sequence is that of Orotidine 5'-phosphate decarboxylase from Methylacidiphilum infernorum (isolate V4) (Methylokorus infernorum (strain V4)).